The following is a 303-amino-acid chain: N-acetylmuramic acid 6-phosphate etherase (303 aa).

The SIS domain occupies isoleucine 62–lysine 225. The Proton donor role is filled by glutamate 90. Glutamate 121 is a catalytic residue.

This sequence belongs to the GCKR-like family. MurNAc-6-P etherase subfamily. As to quaternary structure, homodimer.

It carries out the reaction N-acetyl-D-muramate 6-phosphate + H2O = N-acetyl-D-glucosamine 6-phosphate + (R)-lactate. The protein operates within amino-sugar metabolism; 1,6-anhydro-N-acetylmuramate degradation. Its pathway is amino-sugar metabolism; N-acetylmuramate degradation. It functions in the pathway cell wall biogenesis; peptidoglycan recycling. Specifically catalyzes the cleavage of the D-lactyl ether substituent of MurNAc 6-phosphate, producing GlcNAc 6-phosphate and D-lactate. Together with AnmK, is also required for the utilization of anhydro-N-acetylmuramic acid (anhMurNAc) either imported from the medium or derived from its own cell wall murein, and thus plays a role in cell wall recycling. The polypeptide is N-acetylmuramic acid 6-phosphate etherase (Histophilus somni (strain 129Pt) (Haemophilus somnus)).